A 457-amino-acid chain; its full sequence is UDP-N-acetyl-alpha-D-muramoyl-L-alanyl-L-glutamate epimerase (457 aa).

This sequence belongs to the MurL family.

The catalysed reaction is UDP-N-acetyl-alpha-D-muramoyl-L-alanyl-L-glutamate + ATP + H2O = UDP-N-acetyl-alpha-D-muramoyl-L-alanyl-D-glutamate + AMP + diphosphate + H(+). Its pathway is cell wall biogenesis; peptidoglycan biosynthesis. In terms of biological role, cell wall formation. Catalyzes epimerization of the terminal L-glutamate in UDP-N-acetyl-alpha-D-muramoyl-L-alanyl-L-glutamate. This chain is UDP-N-acetyl-alpha-D-muramoyl-L-alanyl-L-glutamate epimerase, found in Salinispora tropica (strain ATCC BAA-916 / DSM 44818 / JCM 13857 / NBRC 105044 / CNB-440).